The primary structure comprises 92 residues: MAKRTKKVGIVGKYGTRYGASLRKMVKKIEISQHAKYTCSFCGKTKMKRKAVGIWHCGSCMKTVAGGAWTYNTTSAVTVKSAIRRLKELKDQ.

Zn(2+) contacts are provided by C39, C42, C57, and C60. The C4-type zinc-finger motif lies at 39–60 (CSFCGKTKMKRKAVGIWHCGSC).

It belongs to the eukaryotic ribosomal protein eL43 family. Component of the large ribosomal subunit.

Its subcellular location is the cytoplasm. Its function is as follows. Component of the large ribosomal subunit. The ribosome is a large ribonucleoprotein complex responsible for the synthesis of proteins in the cell. This is Large ribosomal subunit protein eL43 (RPL37A) from Gallus gallus (Chicken).